A 925-amino-acid polypeptide reads, in one-letter code: Serine/threonine-protein kinase SIK2 (925 aa).

The Protein kinase domain occupies 20 to 271; that stretch reads YDIEGTLGKG…IAQIKEHKWM (252 aa). Thr-25 carries the post-translational modification Phosphothreonine. ATP is bound by residues 26 to 34 and Lys-49; that span reads LGKGNFAVV. Lys-53 carries the post-translational modification N6-acetyllysine; by EP300. Residue Asp-142 is the Proton acceptor of the active site. The residue at position 175 (Thr-175) is a Phosphothreonine. Residues 295–335 enclose the UBA domain; that stretch reads EFNEQVLRLMHSLGIDQQKTIESLQNKSYNHFAAIYFLLVE. A Phosphoserine modification is found at Ser-534. The tract at residues 564 to 586 is disordered; that stretch reads ALSSQKREVHNRSPVSFREGRRA. Ser-587 is modified (phosphoserine). Disordered regions lie at residues 630–674, 742–776, and 800–895; these read PNLA…PRQS, SSYP…PLSP, and QPLP…SSYD. Low complexity-rich tracts occupy residues 648–659 and 742–756; these read QEEVSQQQESVS and SSYP…LPRQ. Over residues 765-774 the composition is skewed to polar residues; that stretch reads APPFSLTQPL. Low complexity predominate over residues 808 to 820; it reads PRAAPLPTQLQQQ. Residues 821-833 are compositionally biased toward pro residues; that stretch reads QPPPPPPPPPPRQ.

It belongs to the protein kinase superfamily. CAMK Ser/Thr protein kinase family. SNF1 subfamily. As to quaternary structure, interacts with and phosphorylates TORC2/CRTC2. Mg(2+) is required as a cofactor. Phosphorylated at Thr-175 by STK11/LKB1 in complex with STE20-related adapter-alpha (STRADA) pseudo kinase and CAB39. Phosphorylated at Thr-484 in response to insulin in adipocytes. Post-translationally, acetylation at Lys-53 inhibits kinase activity. Deacetylated by HDAC6.

It localises to the cytoplasm. Its subcellular location is the endoplasmic reticulum membrane. The catalysed reaction is L-seryl-[protein] + ATP = O-phospho-L-seryl-[protein] + ADP + H(+). The enzyme catalyses L-threonyl-[protein] + ATP = O-phospho-L-threonyl-[protein] + ADP + H(+). With respect to regulation, activated by phosphorylation on Thr-175. Functionally, serine/threonine-protein kinase that plays a role in many biological processes such as fatty acid oxidation, autophagy, immune response or glucose metabolism. Phosphorylates 'Ser-794' of IRS1 in insulin-stimulated adipocytes, potentially modulating the efficiency of insulin signal transduction. Inhibits CREB activity by phosphorylating and repressing TORCs, the CREB-specific coactivators. Phosphorylates EP300 and thus inhibits its histone acetyltransferase activity. In turn, regulates the DNA-binding ability of several transcription factors such as PPARA or MLXIPL. Also plays a role in thymic T-cell development. This chain is Serine/threonine-protein kinase SIK2 (SIK2), found in Pongo abelii (Sumatran orangutan).